A 279-amino-acid polypeptide reads, in one-letter code: Uroplakin-3b (279 aa).

A signal peptide spans 1–26 (MGLPSRQPRLWLLLLVVLGWPQPCLT). The Lumenal segment spans residues 27 to 200 (LDLIPYTPRI…DTWPGRRSGD (174 aa)). Residue Asn77 is glycosylated (N-linked (GlcNAc...) asparagine). A helical membrane pass occupies residues 201 to 221 (MIIITSILSSLAGLLLLAFLA). Over 222–279 (ASSVRFSSLWWPEEAPEQLRIGSFMGKRYMTHHIPPSEAATLPVGCEPGLERFPSLSP) the chain is Cytoplasmic.

The protein belongs to the uroplakin-3 family. In terms of assembly, heterodimer with uroplakin-1B (UPK1B). As to expression, expression is urothelium-specific.

The protein localises to the cell membrane. In terms of biological role, component of the asymmetric unit membrane (AUM); a highly specialized biomembrane elaborated by terminally differentiated urothelial cells. May play an important role in AUM-cytoskeleton interaction in terminally differentiated urothelial cells. It also contributes to the formation of urothelial glycocalyx which may play an important role in preventing bacterial adherence. This chain is Uroplakin-3b (UPK3B), found in Bos taurus (Bovine).